We begin with the raw amino-acid sequence, 119 residues long: uncharacterized protein (119 aa).

A run of 4 helical transmembrane segments spans residues 3–23 (WVFL…MKLS), 29–49 (LIPS…LTLT), 58–78 (AYAV…FLFF), and 87–107 (VISI…EHVA).

The protein belongs to the drug/metabolite transporter (DMT) superfamily. Small multidrug resistance (SMR) (TC 2.A.7.1) family.

It is found in the cell membrane. This is an uncharacterized protein from Bacillus subtilis (strain 168).